A 216-amino-acid chain; its full sequence is Cytidylate kinase (216 aa).

7–15 (GPSGTGKST) is a binding site for ATP.

It belongs to the cytidylate kinase family. Type 1 subfamily.

Its subcellular location is the cytoplasm. It carries out the reaction CMP + ATP = CDP + ADP. The enzyme catalyses dCMP + ATP = dCDP + ADP. This chain is Cytidylate kinase, found in Chlamydia caviae (strain ATCC VR-813 / DSM 19441 / 03DC25 / GPIC) (Chlamydophila caviae).